Here is a 420-residue protein sequence, read N- to C-terminus: Sulfate adenylyltransferase (420 aa).

The protein belongs to the sulfate adenylyltransferase family.

It carries out the reaction sulfate + ATP + H(+) = adenosine 5'-phosphosulfate + diphosphate. The protein operates within sulfur metabolism; hydrogen sulfide biosynthesis; sulfite from sulfate: step 1/3. This Desulforudis audaxviator (strain MP104C) protein is Sulfate adenylyltransferase.